Reading from the N-terminus, the 155-residue chain is DNA-binding protein inhibitor ID-1 (155 aa).

One can recognise a bHLH domain in the interval 53–105 (LPALLDEQQVNVLLYDMNGCYSRLKELVPTLPQNRKVSKVEILQHVIDYIRDL). The Nuclear export signal motif lies at 98-111 (VIDYIRDLQLELNS).

In terms of assembly, heterodimer with other HLH proteins. Interacts with COPS5, IFI204, GATA4 and NKX2-5. Interacts with CLOCK and BMAL1.

It localises to the cytoplasm. The protein localises to the nucleus. Transcriptional regulator (lacking a basic DNA binding domain) which negatively regulates the basic helix-loop-helix (bHLH) transcription factors by forming heterodimers and inhibiting their DNA binding and transcriptional activity. Implicated in regulating a variety of cellular processes, including cellular growth, senescence, differentiation, apoptosis, angiogenesis, and neoplastic transformation. Inhibits skeletal muscle and cardiac myocyte differentiation. Regulates the circadian clock by repressing the transcriptional activator activity of the CLOCK-BMAL1 heterodimer. The protein is DNA-binding protein inhibitor ID-1 (ID1) of Homo sapiens (Human).